The primary structure comprises 502 residues: Cytochrome P450 71B16 (502 aa).

Residues 1 to 21 form a helical membrane-spanning segment; the sequence is MAISLLCLFLITLVSLIFVVK. Cysteine 444 is a binding site for heme.

This sequence belongs to the cytochrome P450 family. Heme is required as a cofactor.

It is found in the membrane. The sequence is that of Cytochrome P450 71B16 (CYP71B16) from Arabidopsis thaliana (Mouse-ear cress).